We begin with the raw amino-acid sequence, 478 residues long: H(+)/Cl(-) exchange transporter ClcA (478 aa).

Residues 1-32 (MTHSTQQLSPEGVAEGKRGRLIRELVNRDKTP) are Cytoplasmic-facing. The chain crosses the membrane as a helical span at residues 33-69 (LIILIMAAVVGVVTGLLGVAFDRGVDWVQQQRLLALA). The Periplasmic portion of the chain corresponds to 70–76 (NVADSAL). The chain crosses the membrane as a helical span at residues 77-100 (LVWPLAFIMSALLAMMGYFLVSRF). The Selectivity filter part_1 signature appears at 106–110 (GSGIP). Position 107 (S107) interacts with chloride. Residues 109 to 116 (IPEIEGAM) constitute an intramembrane region (helical). At 117-123 (EEMRPVR) the chain is on the cytoplasmic side. The next 2 membrane-spanning stretches (helical) occupy residues 124–141 (WWRVIPVKFIGGLGTLGA) and 148–166 (EGPMVQMGGNSGRMIVDIF). The Selectivity filter part_2 signature appears at 146–150 (GREGP). Topologically, residues 167–176 (RLRSPEARHS) are cytoplasmic. Intramembrane regions (helical) lie at residues 177 to 189 (LLATGAAAGLSAA) and 193 to 201 (PLAGILFVI). At 202-214 (EEMRSQFRYSLVS) the chain is on the cytoplasmic side. The helical transmembrane segment at 215-232 (IKAVFIGVITSTIVYRYF) threads the bilayer. The Periplasmic portion of the chain corresponds to 233-252 (NGERAIIEVGKLSDAPLNTL). The helical transmembrane segment at 253–281 (WLYLLLGIIFGAVGVIFNALIFRTQDMFV) threads the bilayer. At 282 to 287 (RFHGGD) the chain is on the cytoplasmic side. Residues 288-309 (WRKLVLIGGLLGGMCGLLALLH) traverse the membrane as a helical segment. Topologically, residues 310 to 329 (GNAVGGGFALIPIAAAGNFS) are periplasmic. 2 consecutive transmembrane segments (helical) span residues 330–349 (IGMLLFIFIARVITTLLCFG) and 355–376 (GIFAPMLALGTILGTAFGLSCA). The short motif at 355–359 (GIFAP) is the Selectivity filter part_3 element. I356 and F357 together coordinate chloride. Residues 377–386 (HFFPQYGIEA) are Periplasmic-facing. Positions 387-401 (GTFAIAGMGALFAAS) form an intramembrane region, helical. Residues 402 to 404 (VRA) constitute an intramembrane region (note=Loop between two helices). An intramembrane region (helical) is located at residues 405–416 (PLTGIVLVLEMT). An intramembrane region (note=Loop between two helices) is located at residues 417 to 421 (DNYQL). A helical transmembrane segment spans residues 422–438 (ILPMIVTCLGATLIAQF). The Cytoplasmic portion of the chain corresponds to 439-478 (MGGKPLYSAILARTLAKQEQARATVIAQEPAVENTPQTGR). Y445 is a binding site for chloride.

This sequence belongs to the chloride channel (TC 2.A.49) family. ClcA subfamily. As to quaternary structure, homodimer.

Its subcellular location is the cell inner membrane. The catalysed reaction is 2 chloride(in) + H(+)(out) = 2 chloride(out) + H(+)(in). Proton-coupled chloride transporter. Functions as antiport system and exchanges two chloride ions for 1 proton. Probably acts as an electrical shunt for an outwardly-directed proton pump that is linked to amino acid decarboxylation, as part of the extreme acid resistance (XAR) response. The polypeptide is H(+)/Cl(-) exchange transporter ClcA (Yersinia pseudotuberculosis serotype IB (strain PB1/+)).